Here is a 204-residue protein sequence, read N- to C-terminus: Small ribosomal subunit protein uS4 (204 aa).

The segment at Trp20–Asp46 is disordered. Residues Asn28–Gly38 show a composition bias toward basic and acidic residues. Residues Thr93–Leu156 form the S4 RNA-binding domain.

The protein belongs to the universal ribosomal protein uS4 family. As to quaternary structure, part of the 30S ribosomal subunit. Contacts protein S5. The interaction surface between S4 and S5 is involved in control of translational fidelity.

Its function is as follows. One of the primary rRNA binding proteins, it binds directly to 16S rRNA where it nucleates assembly of the body of the 30S subunit. Functionally, with S5 and S12 plays an important role in translational accuracy. This is Small ribosomal subunit protein uS4 from Rhodospirillum rubrum (strain ATCC 11170 / ATH 1.1.1 / DSM 467 / LMG 4362 / NCIMB 8255 / S1).